Consider the following 285-residue polypeptide: Probable endonuclease 4 (285 aa).

Zn(2+) is bound by residues H69, H109, E145, D179, H182, H216, D229, H231, and E261.

Belongs to the AP endonuclease 2 family. Requires Zn(2+) as cofactor.

The catalysed reaction is Endonucleolytic cleavage to 5'-phosphooligonucleotide end-products.. Its function is as follows. Endonuclease IV plays a role in DNA repair. It cleaves phosphodiester bonds at apurinic or apyrimidinic (AP) sites, generating a 3'-hydroxyl group and a 5'-terminal sugar phosphate. This chain is Probable endonuclease 4, found in Escherichia coli O1:K1 / APEC.